Here is a 211-residue protein sequence, read N- to C-terminus: Protein-methionine-sulfoxide reductase heme-binding subunit MsrQ (211 aa).

A run of 6 helical transmembrane segments spans residues 10–30 (WLKV…VWAI), 54–74 (FLLA…PLLI), 82–102 (LWCF…ELGV), 116–136 (PYLT…FTST), 153–173 (FVYL…KIIS), and 178–198 (IYAG…LSLF).

This sequence belongs to the MsrQ family. As to quaternary structure, heterodimer of a catalytic subunit (MsrP) and a heme-binding subunit (MsrQ). FMN serves as cofactor. Heme b is required as a cofactor.

Its subcellular location is the cell inner membrane. Its function is as follows. Part of the MsrPQ system that repairs oxidized periplasmic proteins containing methionine sulfoxide residues (Met-O), using respiratory chain electrons. Thus protects these proteins from oxidative-stress damage caused by reactive species of oxygen and chlorine generated by the host defense mechanisms. MsrPQ is essential for the maintenance of envelope integrity under bleach stress, rescuing a wide series of structurally unrelated periplasmic proteins from methionine oxidation, including the primary periplasmic chaperone SurA and the lipoprotein Pal. MsrQ provides electrons for reduction to the reductase catalytic subunit MsrP, using the quinone pool of the respiratory chain. In Escherichia coli O6:H1 (strain CFT073 / ATCC 700928 / UPEC), this protein is Protein-methionine-sulfoxide reductase heme-binding subunit MsrQ.